Here is a 429-residue protein sequence, read N- to C-terminus: Threonine synthase (429 aa).

K107 is subject to N6-(pyridoxal phosphate)lysine.

The protein belongs to the threonine synthase family. Pyridoxal 5'-phosphate is required as a cofactor.

It carries out the reaction O-phospho-L-homoserine + H2O = L-threonine + phosphate. It participates in amino-acid biosynthesis; L-threonine biosynthesis; L-threonine from L-aspartate: step 5/5. Its function is as follows. Catalyzes the gamma-elimination of phosphate from L-phosphohomoserine and the beta-addition of water to produce L-threonine. This is Threonine synthase (thrC) from Serratia marcescens.